A 458-amino-acid chain; its full sequence is UDP-N-acetylglucosamine 1-carboxyvinyltransferase (458 aa).

34–35 (KN) serves as a coordination point for phosphoenolpyruvate. Arginine 104 is a UDP-N-acetyl-alpha-D-glucosamine binding site. The active-site Proton donor is the cysteine 128. The residue at position 128 (cysteine 128) is a 2-(S-cysteinyl)pyruvic acid O-phosphothioketal. Residues aspartate 320 and valine 342 each contribute to the UDP-N-acetyl-alpha-D-glucosamine site.

It belongs to the EPSP synthase family. MurA subfamily.

Its subcellular location is the cytoplasm. The enzyme catalyses phosphoenolpyruvate + UDP-N-acetyl-alpha-D-glucosamine = UDP-N-acetyl-3-O-(1-carboxyvinyl)-alpha-D-glucosamine + phosphate. It participates in cell wall biogenesis; peptidoglycan biosynthesis. Cell wall formation. Adds enolpyruvyl to UDP-N-acetylglucosamine. The sequence is that of UDP-N-acetylglucosamine 1-carboxyvinyltransferase from Prochlorococcus marinus (strain NATL1A).